The chain runs to 311 residues: Peptide methionine sulfoxide reductase MsrA/MsrB (311 aa).

The peptide methionine sulfoxide reductase A stretch occupies residues 1–155 (MAEIYLAGGC…PGGYCHINVN (155 aa)). Cysteine 10 is an active-site residue. In terms of domain architecture, MsrB spans 172–295 (DAELKEQLTQ…NSAALRFIPK (124 aa)). Catalysis depends on cysteine 284, which acts as the Nucleophile.

The protein in the N-terminal section; belongs to the MsrA Met sulfoxide reductase family. It in the C-terminal section; belongs to the MsrB Met sulfoxide reductase family.

It carries out the reaction L-methionyl-[protein] + [thioredoxin]-disulfide + H2O = L-methionyl-(S)-S-oxide-[protein] + [thioredoxin]-dithiol. It catalyses the reaction [thioredoxin]-disulfide + L-methionine + H2O = L-methionine (S)-S-oxide + [thioredoxin]-dithiol. The catalysed reaction is L-methionyl-[protein] + [thioredoxin]-disulfide + H2O = L-methionyl-(R)-S-oxide-[protein] + [thioredoxin]-dithiol. In terms of biological role, has an important function as a repair enzyme for proteins that have been inactivated by oxidation. Catalyzes the reversible oxidation-reduction of methionine sulfoxide in proteins to methionine. Involved in protection against oxidative stress when the bacterium enters the host bloodstream and required for maximal growth under aerobic and anaerobic conditions. The chain is Peptide methionine sulfoxide reductase MsrA/MsrB (msrAB) from Streptococcus gordonii (strain Challis / ATCC 35105 / BCRC 15272 / CH1 / DL1 / V288).